Here is a 420-residue protein sequence, read N- to C-terminus: Tryptophan synthase beta chain (420 aa).

Lys-100 carries the N6-(pyridoxal phosphate)lysine modification.

Belongs to the TrpB family. In terms of assembly, tetramer of two alpha and two beta chains. It depends on pyridoxal 5'-phosphate as a cofactor.

It catalyses the reaction (1S,2R)-1-C-(indol-3-yl)glycerol 3-phosphate + L-serine = D-glyceraldehyde 3-phosphate + L-tryptophan + H2O. It participates in amino-acid biosynthesis; L-tryptophan biosynthesis; L-tryptophan from chorismate: step 5/5. Its function is as follows. The beta subunit is responsible for the synthesis of L-tryptophan from indole and L-serine. This chain is Tryptophan synthase beta chain, found in Pyrobaculum islandicum (strain DSM 4184 / JCM 9189 / GEO3).